Consider the following 263-residue polypeptide: ATP synthase subunit a (263 aa).

5 helical membrane-spanning segments follow: residues 31-51 (LDTL…FYSI), 89-109 (IGSL…MDLI), 133-153 (DPNA…VYTF), 205-225 (LFGN…LPFW), and 235-255 (AIFH…LTIV).

This sequence belongs to the ATPase A chain family. F-type ATPases have 2 components, CF(1) - the catalytic core - and CF(0) - the membrane proton channel. CF(1) has five subunits: alpha(3), beta(3), gamma(1), delta(1), epsilon(1). CF(0) has three main subunits: a(1), b(2) and c(9-12). The alpha and beta chains form an alternating ring which encloses part of the gamma chain. CF(1) is attached to CF(0) by a central stalk formed by the gamma and epsilon chains, while a peripheral stalk is formed by the delta and b chains.

It localises to the cell inner membrane. Key component of the proton channel; it plays a direct role in the translocation of protons across the membrane. The sequence is that of ATP synthase subunit a from Dichelobacter nodosus (strain VCS1703A).